The chain runs to 298 residues: Glutamyl-Q tRNA(Asp) synthetase (298 aa).

L-glutamate-binding positions include 8-12 and E44; that span reads RFAPS. The 'HIGH' region signature appears at 11-21; the sequence is PSPTGPLHFGS. Zn(2+)-binding residues include C100, C102, Y123, and C127. L-glutamate-binding residues include Y183 and R201. The 'KMSKS' region signature appears at 239–243; that stretch reads KLSKQ. K242 lines the ATP pocket.

This sequence belongs to the class-I aminoacyl-tRNA synthetase family. GluQ subfamily. Zn(2+) serves as cofactor.

Catalyzes the tRNA-independent activation of glutamate in presence of ATP and the subsequent transfer of glutamate onto a tRNA(Asp). Glutamate is transferred on the 2-amino-5-(4,5-dihydroxy-2-cyclopenten-1-yl) moiety of the queuosine in the wobble position of the QUC anticodon. The polypeptide is Glutamyl-Q tRNA(Asp) synthetase (Burkholderia orbicola (strain AU 1054)).